The primary structure comprises 522 residues: Glucose-1-phosphate adenylyltransferase large subunit, chloroplastic/amyloplastic (522 aa).

Residues 1–62 (MSSMQFSSVL…RGPAATGAQC (62 aa)) constitute a chloroplast transit peptide. Residues 28 to 42 (SERLKVGDSSSIRHE) are compositionally biased toward basic and acidic residues. Residues 28-54 (SERLKVGDSSSIRHERASRRMCNGGRG) form a disordered region.

This sequence belongs to the bacterial/plant glucose-1-phosphate adenylyltransferase family. In terms of assembly, heterotetramer. In terms of tissue distribution, abundantly expressed in the whole grains, a slightly less abundant expression is seen in leaves, while a low level expression is seen in the roots. A greater expression is seen in the endosperm than in the embryo and pericarp layers.

It localises to the plastid. It is found in the chloroplast. The protein resides in the amyloplast. The catalysed reaction is alpha-D-glucose 1-phosphate + ATP + H(+) = ADP-alpha-D-glucose + diphosphate. It participates in glycan biosynthesis; starch biosynthesis. With respect to regulation, insensitive to 3'phosphoglycerate and orthophosphate. This protein plays a role in synthesis of starch. It catalyzes the synthesis of the activated glycosyl donor, ADP-glucose from Glc-1-P and ATP. In Triticum aestivum (Wheat), this protein is Glucose-1-phosphate adenylyltransferase large subunit, chloroplastic/amyloplastic (AGP-L).